The primary structure comprises 523 residues: Non-specific phospholipase C3 (523 aa).

Residues 44–64 form a disordered region; it reads DGVSESEPRSNPLSTSDPNSA. A compositionally biased stretch (polar residues) spans 52-64; sequence RSNPLSTSDPNSA.

This sequence belongs to the bacterial phospholipase C family. In terms of tissue distribution, expressed in root tips, cotyledons, on leaf margins, stems, young anthers and funiculus.

The enzyme catalyses a 1-acyl-sn-glycero-3-phosphate + H2O = a 1-acyl-sn-glycerol + phosphate. Functionally, possesses specific phosphatase activity toward lysophosphatidic acid (LPA) in vitro. Does not show phospholipase C activity. May play a role in signal transduction and storage lipid synthesis. May be involved in brassinolide-mediated signaling in root development. This chain is Non-specific phospholipase C3 (NPC3), found in Arabidopsis thaliana (Mouse-ear cress).